A 330-amino-acid chain; its full sequence is Taste receptor type 2 member 117 (330 aa).

At 1 to 16 (MKHFWKILSVISQSTL) the chain is on the extracellular side. The chain crosses the membrane as a helical span at residues 17–37 (SVILIVELVIGIIGNGFMVLV). Residues 38–53 (HCMDWVKKKKMSLVNQ) are Cytoplasmic-facing. Residues 54 to 74 (ILTALSISRIFQLCLLFISLV) traverse the membrane as a helical segment. Over 75–95 (INFSYTDLTTSSRMIQVMYNA) the chain is Extracellular. N-linked (GlcNAc...) asparagine glycosylation occurs at Asn76. Residues 96-116 (WILANHFSIWIATCLTVLYFL) traverse the membrane as a helical segment. Residues 117–135 (KIANFSNSFFLYLKWRVEK) lie on the Cytoplasmic side of the membrane. Residues 136 to 156 (VVSVTLLVSLLLLILNILLTN) traverse the membrane as a helical segment. Residues 157 to 190 (LETDMWTNEYQRNISCSFSSHYYAKCHRQVLRLH) lie on the Extracellular side of the membrane. Asn169 is a glycosylation site (N-linked (GlcNAc...) asparagine). A helical transmembrane segment spans residues 191–211 (IIFLSVPVVLSLSTFLLLIFS). Topologically, residues 212–239 (LWTHHKRMQQHVQGGRDARTTAHFKALQ) are cytoplasmic. The helical transmembrane segment at 240 to 260 (TVIAFFLLYSIFILSVLIQIW) threads the bilayer. Over 261–269 (KYELLKKNL) the chain is Extracellular. The helical transmembrane segment at 270–290 (FVVFCEVVYIAFPTFHSYILI) threads the bilayer. The Cytoplasmic segment spans residues 291–330 (VGDMKLRQACLPLCIIAAEIQTTLCRNFRSLKYFRLCCIF).

Belongs to the G-protein coupled receptor T2R family.

It is found in the membrane. Its function is as follows. Putative taste receptor which may play a role in the perception of bitterness. The sequence is that of Taste receptor type 2 member 117 from Mus musculus (Mouse).